The primary structure comprises 473 residues: tRNA-2-methylthio-N(6)-dimethylallyladenosine synthase (473 aa).

In terms of domain architecture, MTTase N-terminal spans 5-125 (RKLHIKSYGC…LPQLLARADQ (121 aa)). [4Fe-4S] cluster is bound by residues cysteine 14, cysteine 50, cysteine 88, cysteine 166, cysteine 170, and cysteine 173. A Radical SAM core domain is found at 152–384 (RARGISAFVT…QQLIDSQQSA (233 aa)). The TRAM domain maps to 387-459 (KAAIGQTVDV…RYSLLGELAA (73 aa)).

This sequence belongs to the methylthiotransferase family. MiaB subfamily. As to quaternary structure, monomer. [4Fe-4S] cluster serves as cofactor.

It is found in the cytoplasm. The catalysed reaction is N(6)-dimethylallyladenosine(37) in tRNA + (sulfur carrier)-SH + AH2 + 2 S-adenosyl-L-methionine = 2-methylsulfanyl-N(6)-dimethylallyladenosine(37) in tRNA + (sulfur carrier)-H + 5'-deoxyadenosine + L-methionine + A + S-adenosyl-L-homocysteine + 2 H(+). Its function is as follows. Catalyzes the methylthiolation of N6-(dimethylallyl)adenosine (i(6)A), leading to the formation of 2-methylthio-N6-(dimethylallyl)adenosine (ms(2)i(6)A) at position 37 in tRNAs that read codons beginning with uridine. The sequence is that of tRNA-2-methylthio-N(6)-dimethylallyladenosine synthase from Rhodopseudomonas palustris (strain BisB5).